Here is a 136-residue protein sequence, read N- to C-terminus: Protein NrdI (136 aa).

Belongs to the NrdI family.

Probably involved in ribonucleotide reductase function. This chain is Protein NrdI, found in Salmonella dublin (strain CT_02021853).